The sequence spans 691 residues: MARTTPLERVRNIGIAAHIDAGKTTTTERILFYSGVVHKIGEVHEGTTVTDWMEQERERGITITAAAISTSWRDHQINIIDTPGHVDFTIEVERSMRVLDGVIAVFCSVGGVQPQSETVWRQADRYSVPRIVFVNKMDRTGANFYKVHDQIRDRLRANAVPIQLPIGAEDQFKGIVDLVRMRAKIYKDDLGKEIEDTEIPAEMTELAQEYRTKLIEAVAETDDALMEKYFEGEELTEEEIRAALRKGTIAGTIVPMLCGSAFKNKGVQLLLDAVVDYLPAPIDIPAIKGRLPDGTEVERAADDDQPLAALAFKIMSDPYGRLTFVRVYSGVLKKGSYVLNATKGKKERISRLIVLKADERIEVDELRAGDLGAALGLKETFTGDTLCDESSPVILESLYIPEPVISVAVEPKTKQDMEKLSKALQALSEEDPTFRVSVDPETNQTVIAGMGELHLEILVDRMQREYKVEANIGQPQVAYRETIRKPVRAEGKFIRQSGGKGQYGHVVIEVEPAEPGTGFEFVSKIVGGVVPKEYIPPAEQGMKEACESGILAGYPVIDLKVTLVDGSYHEVDSSEMAFKIAGSIAIKEAVMKANPVLLEPMMKVEVEVPEEFLGTVMGDLIARRGQIEGQTVENGIAKVTAKVPLERMFGYATDIRSNTQGRGIFSMEFSHYEEVPRNVAEAIIAKNKGNA.

The tr-type G domain occupies 8–282 (ERVRNIGIAA…AVVDYLPAPI (275 aa)). GTP is bound by residues 17–24 (AHIDAGKT), 81–85 (DTPGH), and 135–138 (NKMD).

It belongs to the TRAFAC class translation factor GTPase superfamily. Classic translation factor GTPase family. EF-G/EF-2 subfamily.

It is found in the cytoplasm. Functionally, catalyzes the GTP-dependent ribosomal translocation step during translation elongation. During this step, the ribosome changes from the pre-translocational (PRE) to the post-translocational (POST) state as the newly formed A-site-bound peptidyl-tRNA and P-site-bound deacylated tRNA move to the P and E sites, respectively. Catalyzes the coordinated movement of the two tRNA molecules, the mRNA and conformational changes in the ribosome. This is Elongation factor G from Thermosynechococcus vestitus (strain NIES-2133 / IAM M-273 / BP-1).